The following is a 79-amino-acid chain: Sec-independent protein translocase protein TatA (79 aa).

Residues 1–21 (MGSLSIWHWIVVIAVVLLLFG) form a helical membrane-spanning segment. Residues 42 to 60 (GLQDDEKTAEKPDAVKSLD) show a composition bias toward basic and acidic residues. The interval 42–79 (GLQDDEKTAEKPDAVKSLDHNATTGTPPNRTDVGSKAV) is disordered. Residues 61-70 (HNATTGTPPN) show a composition bias toward polar residues.

It belongs to the TatA/E family. In terms of assembly, the Tat system comprises two distinct complexes: a TatABC complex, containing multiple copies of TatA, TatB and TatC subunits, and a separate TatA complex, containing only TatA subunits. Substrates initially bind to the TatABC complex, which probably triggers association of the separate TatA complex to form the active translocon.

It localises to the cell inner membrane. Its function is as follows. Part of the twin-arginine translocation (Tat) system that transports large folded proteins containing a characteristic twin-arginine motif in their signal peptide across membranes. TatA could form the protein-conducting channel of the Tat system. In Rhodopseudomonas palustris (strain HaA2), this protein is Sec-independent protein translocase protein TatA.